Here is a 182-residue protein sequence, read N- to C-terminus: Lipoprotein signal peptidase (182 aa).

Helical transmembrane passes span 12–32, 68–88, and 91–111; these read VAVF…TKAW, ATWV…VAGV, and VSMK…GNLI. Catalysis depends on residues aspartate 127 and aspartate 140. The chain crosses the membrane as a helical span at residues 135–155; the sequence is VGNVADIYLVVAGVVLVILIL.

The protein belongs to the peptidase A8 family.

The protein resides in the cell membrane. The enzyme catalyses Release of signal peptides from bacterial membrane prolipoproteins. Hydrolyzes -Xaa-Yaa-Zaa-|-(S,diacylglyceryl)Cys-, in which Xaa is hydrophobic (preferably Leu), and Yaa (Ala or Ser) and Zaa (Gly or Ala) have small, neutral side chains.. Its pathway is protein modification; lipoprotein biosynthesis (signal peptide cleavage). This protein specifically catalyzes the removal of signal peptides from prolipoproteins. This is Lipoprotein signal peptidase from Bifidobacterium longum (strain DJO10A).